A 445-amino-acid polypeptide reads, in one-letter code: Enolase 2 (445 aa).

2 residues coordinate substrate: histidine 164 and glutamate 173. The Proton donor role is filled by glutamate 216. The Mg(2+) site is built by aspartate 251, glutamate 301, and aspartate 328. Residues glutamate 301 and aspartate 328 each coordinate substrate. The active-site Proton acceptor is lysine 353. Residues 380–383 (SHRS) and lysine 404 contribute to the substrate site.

Belongs to the enolase family. Homodimer. It depends on Mg(2+) as a cofactor.

The protein localises to the cytoplasm. The enzyme catalyses (2R)-2-phosphoglycerate = phosphoenolpyruvate + H2O. It participates in carbohydrate degradation; glycolysis; pyruvate from D-glyceraldehyde 3-phosphate: step 4/5. This is Enolase 2 (ENO2) from Hevea brasiliensis (Para rubber tree).